A 213-amino-acid chain; its full sequence is Thiamine import ATP-binding protein ThiQ (213 aa).

In terms of domain architecture, ABC transporter spans 1–212 (MIELNVTFDY…EQGRIVADQL (212 aa)). 31–38 (GESGAGKS) is an ATP binding site.

Belongs to the ABC transporter superfamily. Thiamine importer (TC 3.A.1.19.1) family. In terms of assembly, the complex is composed of two ATP-binding proteins (ThiQ), two transmembrane proteins (ThiP) and a solute-binding protein (ThiB).

It is found in the cell inner membrane. The catalysed reaction is thiamine(out) + ATP + H2O = thiamine(in) + ADP + phosphate + H(+). Part of the ABC transporter complex ThiBPQ involved in thiamine import. Responsible for energy coupling to the transport system. The chain is Thiamine import ATP-binding protein ThiQ from Haemophilus ducreyi (strain 35000HP / ATCC 700724).